Here is a 757-residue protein sequence, read N- to C-terminus: Relaxin receptor 1 (757 aa).

Over 1 to 408 the chain is Extracellular; sequence MTSGSVFFYI…LENLLASIIQ (408 aa). An LDL-receptor class A domain is found at 26 to 63; sequence KCSLGYFPCGNITKCLPQLLHCNGVDDCGNQADEDNCG. 3 cysteine pairs are disulfide-bonded: C27–C40, C34–C53, and C47–C62. N-linked (GlcNAc...) asparagine glycosylation occurs at N36. Ca(2+) is bound by residues L45, N48, V50, D52, D58, and E59. Residues 91–127 enclose the LRRNT domain; sequence ETPECLVGSVPVQCLCRGLELDCDETNLRAVPSVSSN. N127 is a glycosylation site (N-linked (GlcNAc...) asparagine). LRR repeat units lie at residues 151–172, 175–196, 199–220, 223–244, 248–269, 272–293, 296–317, 320–341, and 344–365; these read DLQK…AFRG, SLTK…VFED, RLEW…TFYG, SLIL…PLCQ, RLHW…TLIS, NLTV…TFAP, KLDE…IFKD, ELSQ…QFDY, and KLKS…MFRP. N264 and N272 each carry an N-linked (GlcNAc...) asparagine glycan. N325 carries N-linked (GlcNAc...) asparagine glycosylation. N-linked (GlcNAc...) asparagine glycosylation occurs at N368. The helical transmembrane segment at 409–429 threads the bilayer; it reads RVFVWVVSAVTCFGNVFVICM. Residues 430–443 are Cytoplasmic-facing; sequence RPYIRSENKLYAMS. A helical membrane pass occupies residues 444–464; sequence IISLCCADCLMGIYLFVIGGF. Residues 465–486 lie on the Extracellular side of the membrane; that stretch reads DLKFRGEYNKHAQLWMESTHCQ. C485 and C563 are oxidised to a cystine. The chain crosses the membrane as a helical span at residues 487-507; the sequence is LVGSLAILSTEVSVLLLTFLT. Over 508–527 the chain is Cytoplasmic; that stretch reads LEKYICIVYPFRCVRPGKCR. Residues 528–548 form a helical membrane-spanning segment; that stretch reads TITVLILIWITGFIVAFIPLS. Residues 549–577 lie on the Extracellular side of the membrane; that stretch reads NKEFFKNYYGTNGVCFPLHSEDTESIGAQ. Residues 578-598 traverse the membrane as a helical segment; sequence VYSVAIFLGINLAAFIIIVFS. Residues 599 to 629 are Cytoplasmic-facing; sequence YGSMFYSVHQSAITATEIRNQVKKEMILAKR. Residues 630 to 650 form a helical membrane-spanning segment; the sequence is FFFIVFTDALCWIPIFVVKFL. The Extracellular segment spans residues 651 to 660; sequence SLLQVEIPGT. A helical membrane pass occupies residues 661-681; sequence ITSWVVIFILPINSALNPILY. Over 682 to 757 the chain is Cytoplasmic; sequence TLTTRPFKEM…SQSTRLNSYS (76 aa).

Belongs to the G-protein coupled receptor 1 family. Interacts with C1QTNF8.

It localises to the cell membrane. Its function is as follows. Receptor for relaxins. The activity of this receptor is mediated by G proteins leading to stimulation of adenylate cyclase and an increase of cAMP. Binding of the ligand may also activate a tyrosine kinase pathway that inhibits the activity of a phosphodiesterase that degrades cAMP. The polypeptide is Relaxin receptor 1 (RXFP1) (Pongo abelii (Sumatran orangutan)).